Consider the following 120-residue polypeptide: Prefoldin subunit beta (120 aa).

It belongs to the prefoldin subunit beta family. In terms of assembly, heterohexamer of two alpha and four beta subunits.

Its subcellular location is the cytoplasm. Its function is as follows. Molecular chaperone capable of stabilizing a range of proteins. Seems to fulfill an ATP-independent, HSP70-like function in archaeal de novo protein folding. This chain is Prefoldin subunit beta, found in Methanospirillum hungatei JF-1 (strain ATCC 27890 / DSM 864 / NBRC 100397 / JF-1).